We begin with the raw amino-acid sequence, 236 residues long: Phosphoribosylaminoimidazole-succinocarboxamide synthase (236 aa).

This sequence belongs to the SAICAR synthetase family.

The catalysed reaction is 5-amino-1-(5-phospho-D-ribosyl)imidazole-4-carboxylate + L-aspartate + ATP = (2S)-2-[5-amino-1-(5-phospho-beta-D-ribosyl)imidazole-4-carboxamido]succinate + ADP + phosphate + 2 H(+). Its pathway is purine metabolism; IMP biosynthesis via de novo pathway; 5-amino-1-(5-phospho-D-ribosyl)imidazole-4-carboxamide from 5-amino-1-(5-phospho-D-ribosyl)imidazole-4-carboxylate: step 1/2. The protein is Phosphoribosylaminoimidazole-succinocarboxamide synthase of Rickettsia akari (strain Hartford).